A 302-amino-acid polypeptide reads, in one-letter code: UDP-N-acetylenolpyruvoylglucosamine reductase (302 aa).

Positions 27–192 (KVGGAVDYLA…LSAKFALRPG (166 aa)) constitute an FAD-binding PCMH-type domain. The active site involves arginine 171. The active-site Proton donor is the serine 221. Residue glutamate 291 is part of the active site.

Belongs to the MurB family. Requires FAD as cofactor.

It is found in the cytoplasm. It carries out the reaction UDP-N-acetyl-alpha-D-muramate + NADP(+) = UDP-N-acetyl-3-O-(1-carboxyvinyl)-alpha-D-glucosamine + NADPH + H(+). Its pathway is cell wall biogenesis; peptidoglycan biosynthesis. Its function is as follows. Cell wall formation. The chain is UDP-N-acetylenolpyruvoylglucosamine reductase from Streptococcus suis (strain 98HAH33).